Consider the following 181-residue polypeptide: MQAATLSFHPSAPPPQTSACHFSSKQPNQLKYSLFSYTCPILKRSLLSTQTLSRKSICKPPAVATGKYVREDYLVKKVSAKDIQELIKGERNVPLIIDFYATWCGPCILMAQELEMLAVEYESNALIVKVDADDEYEFARDMQVRGLPTLYFISPDPNKDAIRTEGLIPIQMMRDIINNDL.

Residues 1–20 (MQAATLSFHPSAPPPQTSAC) form a disordered region. The N-terminal 70 residues, 1–70 (MQAATLSFHP…PAVATGKYVR (70 aa)), are a transit peptide targeting the chloroplast. The Thioredoxin domain maps to 71–181 (EDYLVKKVSA…MMRDIINNDL (111 aa)). Residues Cys-104 and Cys-107 each act as nucleophile in the active site. A disulfide bridge connects residues Cys-104 and Cys-107.

Belongs to the thioredoxin family. Plant CITRX-type subfamily.

Its subcellular location is the plastid. The protein resides in the chloroplast. Probable thiol-disulfide oxidoreductase that may play a role in proper chloroplast development. This chain is Thioredoxin-like protein CITRX1, chloroplastic, found in Nicotiana benthamiana.